We begin with the raw amino-acid sequence, 184 residues long: Glutathione-regulated potassium-efflux system ancillary protein KefG (184 aa).

This sequence belongs to the NAD(P)H dehydrogenase (quinone) family. KefG subfamily. Interacts with KefB.

It localises to the cell inner membrane. The catalysed reaction is a quinone + NADH + H(+) = a quinol + NAD(+). It catalyses the reaction a quinone + NADPH + H(+) = a quinol + NADP(+). Functionally, regulatory subunit of a potassium efflux system that confers protection against electrophiles. Required for full activity of KefB. This is Glutathione-regulated potassium-efflux system ancillary protein KefG from Escherichia coli O1:K1 / APEC.